Consider the following 341-residue polypeptide: Putative amino-acid ABC transporter-binding protein YhdW (341 aa).

Positions 1 to 19 are cleaved as a signal peptide; sequence MKKMMIATLAAASVLLAVA.

It belongs to the bacterial solute-binding protein 3 family.

It is found in the periplasm. Functionally, probably part of the binding-protein-dependent transport system YdhWXYZ for an amino acid. This chain is Putative amino-acid ABC transporter-binding protein YhdW (yhdW), found in Escherichia coli (strain K12).